We begin with the raw amino-acid sequence, 151 residues long: Abdominal ganglion neuropeptide L11 (151 aa).

The signal sequence occupies residues 1-25 (MPCTPNSHRLLLVTALCLLITSLFA).

The protein resides in the secreted. This Aplysia californica (California sea hare) protein is Abdominal ganglion neuropeptide L11.